A 368-amino-acid polypeptide reads, in one-letter code: Glutamate 5-kinase (368 aa).

Residue Lys13 coordinates ATP. Positions 54, 141, and 153 each coordinate substrate. 173-174 (SD) contacts ATP. The 78-residue stretch at 278-355 (RGVITVDEGA…DEIEAILGYA (78 aa)) folds into the PUA domain.

This sequence belongs to the glutamate 5-kinase family.

The protein localises to the cytoplasm. It carries out the reaction L-glutamate + ATP = L-glutamyl 5-phosphate + ADP. Its pathway is amino-acid biosynthesis; L-proline biosynthesis; L-glutamate 5-semialdehyde from L-glutamate: step 1/2. In terms of biological role, catalyzes the transfer of a phosphate group to glutamate to form L-glutamate 5-phosphate. This Ruegeria sp. (strain TM1040) (Silicibacter sp.) protein is Glutamate 5-kinase.